A 146-amino-acid chain; its full sequence is D-aminoacyl-tRNA deacylase (146 aa).

The short motif at 137–138 is the Gly-cisPro motif, important for rejection of L-amino acids element; the sequence is GP.

The protein belongs to the DTD family. In terms of assembly, homodimer.

Its subcellular location is the cytoplasm. The catalysed reaction is glycyl-tRNA(Ala) + H2O = tRNA(Ala) + glycine + H(+). It catalyses the reaction a D-aminoacyl-tRNA + H2O = a tRNA + a D-alpha-amino acid + H(+). Its function is as follows. An aminoacyl-tRNA editing enzyme that deacylates mischarged D-aminoacyl-tRNAs. Also deacylates mischarged glycyl-tRNA(Ala), protecting cells against glycine mischarging by AlaRS. Acts via tRNA-based rather than protein-based catalysis; rejects L-amino acids rather than detecting D-amino acids in the active site. By recycling D-aminoacyl-tRNA to D-amino acids and free tRNA molecules, this enzyme counteracts the toxicity associated with the formation of D-aminoacyl-tRNA entities in vivo and helps enforce protein L-homochirality. This is D-aminoacyl-tRNA deacylase from Bacillus cereus (strain B4264).